Here is a 163-residue protein sequence, read N- to C-terminus: 3-hydroxyacyl-[acyl-carrier-protein] dehydratase FabZ (163 aa).

His-58 is a catalytic residue.

The protein belongs to the thioester dehydratase family. FabZ subfamily.

The protein localises to the cytoplasm. The enzyme catalyses a (3R)-hydroxyacyl-[ACP] = a (2E)-enoyl-[ACP] + H2O. In terms of biological role, involved in unsaturated fatty acids biosynthesis. Catalyzes the dehydration of short chain beta-hydroxyacyl-ACPs and long chain saturated and unsaturated beta-hydroxyacyl-ACPs. This is 3-hydroxyacyl-[acyl-carrier-protein] dehydratase FabZ from Francisella tularensis subsp. tularensis (strain FSC 198).